The chain runs to 96 residues: Cysteine protease immunity 1 (96 aa).

In Escherichia coli O1:K1:H7 (strain ATCC 11775 / DSM 30083 / JCM 1649 / NBRC 102203 / NCTC 9001 / U5/41), this protein is Cysteine protease immunity 1.